The primary structure comprises 186 residues: Protein SPMIP2 (186 aa).

Residues 163–186 (SSLPRASKPPKLPKLPKKEKKRKH) form a disordered region. Residues 176 to 186 (KLPKKEKKRKH) show a composition bias toward basic residues.

This chain is Protein SPMIP2, found in Homo sapiens (Human).